A 938-amino-acid chain; its full sequence is Protein NLP3 (938 aa).

Disordered stretches follow at residues 1–26 and 557–597; these read MEVDPSSSLPGAGEGGGGGIGGGGGD and LADD…KAEK. The segment covering 12–26 has biased composition (gly residues); sequence AGEGGGGGIGGGGGD. Positions 580 to 597 are enriched in basic and acidic residues; the sequence is SLHKSNKPPERRRGKAEK. The 82-residue stretch at 585–666 folds into the RWP-RK domain; it reads NKPPERRRGK…IESVQGSDAA (82 aa). A coiled-coil region spans residues 640–662; sequence SRKINKVNRSLSKLKQVIESVQG. The segment at 743-769 is disordered; it reads DKASHSRSSSGEGSINSRTSEASCHGS. Positions 748 to 762 are enriched in low complexity; that stretch reads SRSSSGEGSINSRTS. In terms of domain architecture, PB1 spans 847 to 926; it reads TVTIKASFKE…HVIRLLVSDV (80 aa).

The protein localises to the nucleus. In terms of biological role, probable transcription factor. The protein is Protein NLP3 (NLP3) of Oryza sativa subsp. japonica (Rice).